The chain runs to 467 residues: Cytochrome P450 monooxygenase azaI (467 aa).

Residues 1–28 form the signal peptide; that stretch reads MESLAQLPGIFLPLAGCVLALSLSALLA. Position 411 (cysteine 411) interacts with heme.

It belongs to the cytochrome P450 family. Heme serves as cofactor.

The protein operates within secondary metabolite biosynthesis. In terms of biological role, cytochrome P450 monooxygenase; part of the gene cluster that mediates the biosynthesis of azaphilones, a class of fungal metabolites characterized by a highly oxygenated pyrano-quinone bicyclic core and exhibiting a broad range of bioactivities. In the first step, the non-reducing polyketide synthase azaA forms the hexaketide precursor from successive condensations of five malonyl-CoA units, presumably with a simple acetyl-CoA starter unit. The reactive polyketide chain then undergoes a PT-mediated C2-C7 cyclization to afford the aromatic ring and is eventually released as an aldehyde through the R-domain. The putative ketoreductase azaE is proposed to catalyze the reduction of the terminal ketone resulting in the early culture product FK17-P2a. The monooxygenase azaH was demonstrated to be the only enzyme required to convert FK17-P2a to azanigerone E. AzaH first hydroxylates the benzaldehyde intermediate FK17-P2a at C4, which triggers the formation of the pyran-ring to afford azanigerone E. In parallel, the 2,4-dimethylhexanoyl chain is synthesized by the HR-PKS azaB and is proposed to be transferred to the C4-hydroxyl of azanigerone E by the acyltransferase azaD directly from the ACP domain of azaB. Alternatively, the 2,4-dimethyl-hexanoyl chain may be offloaded from the HR-PKS as a carboxylic acid and converted to an acyl-CoA by azaF. The resulting acyl-CoA molecule could then be taken up as a substrate by AzaD to form azanigerone B. To yield the carboxylic acid substituent in azanigerone A, the hydroxypropyl side chain of azanigerone B would need to undergo a C-C oxidative cleavage catalyzed by cytochrome P450 AzaI. AzaI is proposed to act on a vicinal diol that leads to a C-C bond scission either through an alkoxyradical intermediate or a peroxy complex. In the biosynthesis of azanigerone A, azanigerone B first undergoes hydroxylation at C10, possibly catalyzed by one of the two FAD-dependent monooxygenases encoded in the cluster, azaG or azaL, resulting in the vicinal diol azanigerone C. Oxidative cleavage of azanigerone C by azaI would yield the corresponding aldehyde derivative of azanigerone A. Finally, the dehydrogenase azaJ is proposed to convert the aldehyde functional group into the carboxylic acid, completing the conversion from azanigerone B to azanigerone A. Alternatively, the oxidation of aldehyde to carboxylic acid may be catalyzed by the same P450 enzyme azaI via consecutive oxidation or by endogenous alcohol dehydrogenase. This chain is Cytochrome P450 monooxygenase azaI, found in Aspergillus niger (strain ATCC 1015 / CBS 113.46 / FGSC A1144 / LSHB Ac4 / NCTC 3858a / NRRL 328 / USDA 3528.7).